The following is a 312-amino-acid chain: Glycerol-3-phosphate dehydrogenase [NAD(P)+] (312 aa).

The NADPH site is built by W11, R30, R31, and K95. Sn-glycerol 3-phosphate contacts are provided by K95, G123, and S125. An NADPH-binding site is contributed by A127. Sn-glycerol 3-phosphate contacts are provided by K177, D230, S240, R241, and N242. The Proton acceptor role is filled by K177. R241 contributes to the NADPH binding site. 2 residues coordinate NADPH: V265 and E267.

Belongs to the NAD-dependent glycerol-3-phosphate dehydrogenase family.

It localises to the cytoplasm. The catalysed reaction is sn-glycerol 3-phosphate + NAD(+) = dihydroxyacetone phosphate + NADH + H(+). It catalyses the reaction sn-glycerol 3-phosphate + NADP(+) = dihydroxyacetone phosphate + NADPH + H(+). Its pathway is membrane lipid metabolism; glycerophospholipid metabolism. Catalyzes the reduction of the glycolytic intermediate dihydroxyacetone phosphate (DHAP) to sn-glycerol 3-phosphate (G3P), the key precursor for phospholipid synthesis. This Helicobacter pylori (strain P12) protein is Glycerol-3-phosphate dehydrogenase [NAD(P)+].